A 404-amino-acid polypeptide reads, in one-letter code: Alanyl-tRNA editing protein AlaX-L (404 aa).

Positions 104, 108, 202, and 206 each coordinate Zn(2+).

The protein belongs to the class-II aminoacyl-tRNA synthetase family. Editing domain AlaX-L subfamily. Zn(2+) serves as cofactor.

The protein localises to the cytoplasm. In terms of biological role, functions in trans to edit the amino acid moiety from mischarged charged tRNA(Ala). The chain is Alanyl-tRNA editing protein AlaX-L (alaXL) from Pyrococcus horikoshii (strain ATCC 700860 / DSM 12428 / JCM 9974 / NBRC 100139 / OT-3).